A 290-amino-acid chain; its full sequence is Probable branched-chain-amino-acid aminotransferase (290 aa).

N6-(pyridoxal phosphate)lysine is present on Lys155.

It belongs to the class-IV pyridoxal-phosphate-dependent aminotransferase family. Requires pyridoxal 5'-phosphate as cofactor.

It carries out the reaction L-leucine + 2-oxoglutarate = 4-methyl-2-oxopentanoate + L-glutamate. The enzyme catalyses L-isoleucine + 2-oxoglutarate = (S)-3-methyl-2-oxopentanoate + L-glutamate. The catalysed reaction is L-valine + 2-oxoglutarate = 3-methyl-2-oxobutanoate + L-glutamate. It functions in the pathway amino-acid biosynthesis; L-isoleucine biosynthesis; L-isoleucine from 2-oxobutanoate: step 4/4. The protein operates within amino-acid biosynthesis; L-leucine biosynthesis; L-leucine from 3-methyl-2-oxobutanoate: step 4/4. It participates in amino-acid biosynthesis; L-valine biosynthesis; L-valine from pyruvate: step 4/4. In terms of biological role, acts on leucine, isoleucine and valine. In Rickettsia conorii (strain ATCC VR-613 / Malish 7), this protein is Probable branched-chain-amino-acid aminotransferase (ilvE).